We begin with the raw amino-acid sequence, 538 residues long: Reticuline oxidase (538 aa).

Residues 1-23 (MENKTPIFFSLSIFLSLLNCALG) form the signal peptide. The cysteines at positions 30 and 89 are disulfide-linked. The N-linked (GlcNAc...) asparagine glycan is linked to Asn-38. The 175-residue stretch at 67–241 (LISKPSAIIL…YAWKIKLLPV (175 aa)) folds into the FAD-binding PCMH-type domain. The segment at residues 104–166 (HSYEGLSYTS…SKLGFTAGWC (63 aa)) is a cross-link (6-(S-cysteinyl)-8alpha-(pros-histidyl)-FAD (His-Cys)). N-linked (GlcNAc...) asparagine glycans are attached at residues Asn-423 and Asn-471.

This sequence belongs to the oxygen-dependent FAD-linked oxidoreductase family. Requires FAD as cofactor. The cofactor is a metal cation. The FAD cofactor is bound via a bicovalent 6-S-cysteinyl, 8alpha-N1-histidyl FAD linkage.

It localises to the cytoplasmic vesicle. It carries out the reaction (S)-reticuline + O2 = (S)-scoulerine + H2O2 + H(+). The protein operates within alkaloid biosynthesis; (S)-scoulerine biosynthesis; (S)-scoulerine from (S)-reticuline: step 1/1. Functionally, essential to the formation of benzophenanthridine alkaloids in the response of plants to pathogenic attack. Catalyzes the stereospecific conversion of the N-methyl moiety of (S)-reticuline into the berberine bridge carbon of (S)-scoulerine. This Eschscholzia californica (California poppy) protein is Reticuline oxidase (BBE1).